Here is a 232-residue protein sequence, read N- to C-terminus: Ubiquinone biosynthesis O-methyltransferase (232 aa).

S-adenosyl-L-methionine contacts are provided by Arg36, Gly55, Asp76, and Met120.

Belongs to the methyltransferase superfamily. UbiG/COQ3 family.

It carries out the reaction a 3-demethylubiquinol + S-adenosyl-L-methionine = a ubiquinol + S-adenosyl-L-homocysteine + H(+). It catalyses the reaction a 3-(all-trans-polyprenyl)benzene-1,2-diol + S-adenosyl-L-methionine = a 2-methoxy-6-(all-trans-polyprenyl)phenol + S-adenosyl-L-homocysteine + H(+). The protein operates within cofactor biosynthesis; ubiquinone biosynthesis. O-methyltransferase that catalyzes the 2 O-methylation steps in the ubiquinone biosynthetic pathway. The chain is Ubiquinone biosynthesis O-methyltransferase from Chromobacterium violaceum (strain ATCC 12472 / DSM 30191 / JCM 1249 / CCUG 213 / NBRC 12614 / NCIMB 9131 / NCTC 9757 / MK).